Here is a 444-residue protein sequence, read N- to C-terminus: Phosphoribosylamine--glycine ligase (444 aa).

The 216-residue stretch at arginine 109–glutamate 324 folds into the ATP-grasp domain. Methionine 140 to threonine 202 contacts ATP. Positions 282, 294, and 296 each coordinate Mg(2+). Residues glutamine 282, glutamate 294, and asparagine 296 each contribute to the Mn(2+) site.

Belongs to the GARS family. Mg(2+) serves as cofactor. The cofactor is Mn(2+).

The enzyme catalyses 5-phospho-beta-D-ribosylamine + glycine + ATP = N(1)-(5-phospho-beta-D-ribosyl)glycinamide + ADP + phosphate + H(+). The protein operates within purine metabolism; IMP biosynthesis via de novo pathway; N(1)-(5-phospho-D-ribosyl)glycinamide from 5-phospho-alpha-D-ribose 1-diphosphate: step 2/2. The polypeptide is Phosphoribosylamine--glycine ligase (Methanococcus maripaludis (strain C5 / ATCC BAA-1333)).